The sequence spans 366 residues: C-X-C chemokine receptor type 3 (366 aa).

The Extracellular portion of the chain corresponds to 1–55 (MVPEMSERQEFQASDFAYLLENSSYDYGENETYFCCTSPPCPQDFSLNFDRTFLP). An N-linked (GlcNAc...) asparagine glycan is attached at asparagine 22. A sulfotyrosine mark is found at tyrosine 25 and tyrosine 27. The N-linked (GlcNAc...) asparagine glycan is linked to asparagine 30. The chain crosses the membrane as a helical span at residues 56–76 (VLYSLLFVLGLLGNGIVAVVL). At 77–88 (LSQRAALSSTDT) the chain is on the cytoplasmic side. Residues 89 to 109 (FLLHLAVADALLVLTLPLWAV) traverse the membrane as a helical segment. At 110–124 (DAAIQWVFGSGLCKV) the chain is on the extracellular side. Cysteine 122 and cysteine 201 are disulfide-bonded. The helical transmembrane segment at 125–145 (AGALFNINFYAGALLLACISF) threads the bilayer. Over 146 to 167 (DRYLSIVHATQLYRRGPPTRVA) the chain is Cytoplasmic. The chain crosses the membrane as a helical span at residues 168–188 (LTCVAVWGLCLLFALPDFIFL). Residues 189–221 (SSHHDNRLNATHCQYNFPQEGHTALRILQLVAG) are Extracellular-facing. The N-linked (GlcNAc...) asparagine glycan is linked to asparagine 197. A helical membrane pass occupies residues 222–242 (FLLPLLVMAYCYARILAVLLV). Residues 243 to 254 (SRGQRRLRAMRL) are Cytoplasmic-facing. The chain crosses the membrane as a helical span at residues 255–275 (VVVVVVAFALCWTPYHLVVLV). At 276–299 (DTLMDLGALARNCGRESSVDIAKS) the chain is on the extracellular side. Residues 300-320 (VTSGMGYMHCCLNPLLYAFVG) traverse the membrane as a helical segment. Residues 321-366 (VKFRERMWVLLVRLGCPDQRCHQRQPSASRRESSWSETTEASYSGL) are Cytoplasmic-facing. Positions 341–366 (CHQRQPSASRRESSWSETTEASYSGL) are disordered. Residues 355–366 (WSETTEASYSGL) show a composition bias toward low complexity.

Belongs to the G-protein coupled receptor 1 family. In terms of assembly, homomer. Forms heteromers with ACKR4. Interacts with PF4/CXCL4. In terms of processing, sulfation on Tyr-25 and Tyr-27 is essential for CXCL10 binding. N-glycosylated.

Its subcellular location is the cell membrane. In terms of biological role, receptor for the C-X-C chemokine CXCL9, CXCL10 and CXCL11 and mediates the proliferation, survival and angiogenic activity of mesangial cells through a heterotrimeric G-protein signaling pathway. Probably promotes cell chemotaxis response. Binds to CCL21. Upon activation by PF4, induces activated T-lymphocytes migration mediated via downstream Ras/extracellular signal-regulated kinase (ERK) signaling. The chain is C-X-C chemokine receptor type 3 (CXCR3) from Bos taurus (Bovine).